We begin with the raw amino-acid sequence, 447 residues long: Probable aspartic protease At2g35615 (447 aa).

Residues 1–20 form the signal peptide; sequence MATQILLCFFLFFSVTLSSS. Asn-25 is a glycosylation site (N-linked (GlcNAc...) asparagine). The Peptidase A1 domain occupies 85–439; it reads FFMSITIGTP…DLETRTVSFQ (355 aa). Asp-103 is a catalytic residue. Asn-251 carries N-linked (GlcNAc...) asparagine glycosylation. Residue Asp-326 is part of the active site.

This sequence belongs to the peptidase A1 family.

It localises to the secreted. The polypeptide is Probable aspartic protease At2g35615 (Arabidopsis thaliana (Mouse-ear cress)).